The sequence spans 345 residues: Centromere protein L (345 aa).

Phosphoserine is present on residues Ser-40 and Ser-54.

Belongs to the CENP-L/IML3 family. Component of the CENPA-CAD complex, composed of CENPI, CENPK, CENPL, CENPO, CENPP, CENPQ, CENPR and CENPS. The CENPA-CAD complex interacts with the CENPA-NAC complex, at least composed of CENPA, CENPC, CENPH, CENPM, CENPN, CENPT and CENPU.

It localises to the nucleus. The protein localises to the chromosome. The protein resides in the centromere. In terms of biological role, component of the CENPA-CAD (nucleosome distal) complex, a complex recruited to centromeres which is involved in assembly of kinetochore proteins, mitotic progression and chromosome segregation. May be involved in incorporation of newly synthesized CENPA into centromeres via its interaction with the CENPA-NAC complex. The polypeptide is Centromere protein L (Cenpl) (Rattus norvegicus (Rat)).